The primary structure comprises 385 residues: Glucans biosynthesis protein C (385 aa).

The next 10 helical transmembrane spans lie at 17–37, 60–80, 91–111, 137–157, 173–193, 212–232, 239–259, 274–294, 311–331, and 338–358; these read AWLM…SHTW, MQVF…RYPL, VGIP…IMLQ, ISHL…VWIF, KFSM…YAVI, FIVM…LAFI, LFTT…VAYL, TESV…FSFG, ASLF…AYIT, and WLGF…LYEI.

It belongs to the acyltransferase 3 family. OpgC subfamily.

It localises to the cell membrane. It participates in glycan metabolism; osmoregulated periplasmic glucan (OPG) biosynthesis. Necessary for the succinyl substitution of periplasmic glucans. Could catalyze the transfer of succinyl residues from the cytoplasmic side of the membrane to the nascent glucan backbones on the periplasmic side of the membrane. This Escherichia coli O6:K15:H31 (strain 536 / UPEC) protein is Glucans biosynthesis protein C.